The sequence spans 227 residues: Cytochrome c oxidase subunit 2 (227 aa).

Residues Met-1–Ser-14 lie on the Mitochondrial intermembrane side of the membrane. Residues Pro-15–Thr-45 traverse the membrane as a helical segment. Residues Leu-46–Gln-59 are Mitochondrial matrix-facing. A helical transmembrane segment spans residues Glu-60–Thr-87. Topologically, residues Asp-88–Leu-227 are mitochondrial intermembrane. Cu cation-binding residues include His-161, Cys-196, Glu-198, Cys-200, His-204, and Met-207. A Mg(2+)-binding site is contributed by Glu-198.

This sequence belongs to the cytochrome c oxidase subunit 2 family. As to quaternary structure, component of the cytochrome c oxidase (complex IV, CIV), a multisubunit enzyme composed of 14 subunits. The complex is composed of a catalytic core of 3 subunits MT-CO1, MT-CO2 and MT-CO3, encoded in the mitochondrial DNA, and 11 supernumerary subunits COX4I, COX5A, COX5B, COX6A, COX6B, COX6C, COX7A, COX7B, COX7C, COX8 and NDUFA4, which are encoded in the nuclear genome. The complex exists as a monomer or a dimer and forms supercomplexes (SCs) in the inner mitochondrial membrane with NADH-ubiquinone oxidoreductase (complex I, CI) and ubiquinol-cytochrome c oxidoreductase (cytochrome b-c1 complex, complex III, CIII), resulting in different assemblies (supercomplex SCI(1)III(2)IV(1) and megacomplex MCI(2)III(2)IV(2)). Found in a complex with TMEM177, COA6, COX18, COX20, SCO1 and SCO2. Interacts with TMEM177 in a COX20-dependent manner. Interacts with COX20. Interacts with COX16. The cofactor is Cu cation.

Its subcellular location is the mitochondrion inner membrane. The enzyme catalyses 4 Fe(II)-[cytochrome c] + O2 + 8 H(+)(in) = 4 Fe(III)-[cytochrome c] + 2 H2O + 4 H(+)(out). Functionally, component of the cytochrome c oxidase, the last enzyme in the mitochondrial electron transport chain which drives oxidative phosphorylation. The respiratory chain contains 3 multisubunit complexes succinate dehydrogenase (complex II, CII), ubiquinol-cytochrome c oxidoreductase (cytochrome b-c1 complex, complex III, CIII) and cytochrome c oxidase (complex IV, CIV), that cooperate to transfer electrons derived from NADH and succinate to molecular oxygen, creating an electrochemical gradient over the inner membrane that drives transmembrane transport and the ATP synthase. Cytochrome c oxidase is the component of the respiratory chain that catalyzes the reduction of oxygen to water. Electrons originating from reduced cytochrome c in the intermembrane space (IMS) are transferred via the dinuclear copper A center (CU(A)) of subunit 2 and heme A of subunit 1 to the active site in subunit 1, a binuclear center (BNC) formed by heme A3 and copper B (CU(B)). The BNC reduces molecular oxygen to 2 water molecules using 4 electrons from cytochrome c in the IMS and 4 protons from the mitochondrial matrix. This is Cytochrome c oxidase subunit 2 (MT-CO2) from Pan paniscus (Pygmy chimpanzee).